We begin with the raw amino-acid sequence, 193 residues long: Xanthine phosphoribosyltransferase (193 aa).

Xanthine-binding residues include leucine 20 and threonine 27. 128–132 is a 5-phospho-alpha-D-ribose 1-diphosphate binding site; that stretch reads ANGQA. Lysine 156 contacts xanthine.

Belongs to the purine/pyrimidine phosphoribosyltransferase family. Xpt subfamily. Homodimer.

Its subcellular location is the cytoplasm. The catalysed reaction is XMP + diphosphate = xanthine + 5-phospho-alpha-D-ribose 1-diphosphate. The protein operates within purine metabolism; XMP biosynthesis via salvage pathway; XMP from xanthine: step 1/1. In terms of biological role, converts the preformed base xanthine, a product of nucleic acid breakdown, to xanthosine 5'-monophosphate (XMP), so it can be reused for RNA or DNA synthesis. The chain is Xanthine phosphoribosyltransferase from Streptococcus equi subsp. zooepidemicus (strain H70).